Consider the following 878-residue polypeptide: Probable glucan endo-1,3-beta-glucosidase ARB_02077 (878 aa).

The first 27 residues, 1 to 27 (MARGLVSSLLLGQLLLVLVGLFSPAGA), serve as a signal peptide directing secretion. Residues Asn228, Asn257, Asn290, and Asn297 are each glycosylated (N-linked (GlcNAc...) asparagine). The tract at residues 373–472 (AGSGSKAKRL…TACPSAPVTK (100 aa)) is disordered. The span at 400–416 (APAPQPPAQSTAPPYPI) shows a compositional bias: pro residues. A compositionally biased stretch (low complexity) spans 433–452 (VPTRVPTGGVPSGTTGTAPS). N-linked (GlcNAc...) asparagine glycans are attached at residues Asn505, Asn659, Asn795, and Asn862.

Belongs to the glycosyl hydrolase 55 family.

The protein resides in the secreted. The enzyme catalyses Hydrolysis of (1-&gt;3)-beta-D-glucosidic linkages in (1-&gt;3)-beta-D-glucans.. In terms of biological role, probable glucan endo-1,3-beta-glucosidase involved in the hydrolysis of fungal cell wall. Classified as a small-oligosaccharide-producing type based its the end products: glucose, laminaribiose or laminaritetraose. The sequence is that of Probable glucan endo-1,3-beta-glucosidase ARB_02077 from Arthroderma benhamiae (strain ATCC MYA-4681 / CBS 112371) (Trichophyton mentagrophytes).